The following is a 147-amino-acid chain: Hemoglobin subunit beta-H0 (147 aa).

Residues 3 to 147 (HFTAEEKAAI…VATALSHKYH (145 aa)) enclose the Globin domain. His64 and His93 together coordinate heme b.

Belongs to the globin family. In terms of assembly, heterotetramer of two alpha chains and two beta chains. In terms of tissue distribution, red blood cells.

In terms of biological role, this is a minor early embryonic beta chain. This is Hemoglobin subunit beta-H0 (Hbb-bh0) from Mus musculus (Mouse).